A 614-amino-acid chain; its full sequence is Phosphomethylpyrimidine synthase (614 aa).

Positions 1–16 (MNAQLSALQQQAQQLS) are enriched in low complexity. Residues 1–36 (MNAQLSALQQQAQQLSESVTRPIPGSRKIHVPGSRP) form a disordered region. Substrate-binding positions include Asn-230, Met-259, Tyr-288, His-324, 344–346 (SRG), 385–388 (DGLR), and Glu-424. Residue His-428 coordinates Zn(2+). Residue Tyr-451 participates in substrate binding. His-492 is a binding site for Zn(2+). Cys-572, Cys-575, and Cys-580 together coordinate [4Fe-4S] cluster.

The protein belongs to the ThiC family. As to quaternary structure, homodimer. [4Fe-4S] cluster serves as cofactor.

It carries out the reaction 5-amino-1-(5-phospho-beta-D-ribosyl)imidazole + S-adenosyl-L-methionine = 4-amino-2-methyl-5-(phosphooxymethyl)pyrimidine + CO + 5'-deoxyadenosine + formate + L-methionine + 3 H(+). Its pathway is cofactor biosynthesis; thiamine diphosphate biosynthesis. Functionally, catalyzes the synthesis of the hydroxymethylpyrimidine phosphate (HMP-P) moiety of thiamine from aminoimidazole ribotide (AIR) in a radical S-adenosyl-L-methionine (SAM)-dependent reaction. This chain is Phosphomethylpyrimidine synthase, found in Stenotrophomonas maltophilia (strain R551-3).